A 362-amino-acid polypeptide reads, in one-letter code: 3-dehydroquinate synthase (362 aa).

Residues 71–76, 105–109, 129–130, lysine 142, lysine 151, and 169–172 each bind NAD(+); these read DGEQYK, GVIGD, TT, and CLKT. 3 residues coordinate Zn(2+): glutamate 184, histidine 247, and histidine 264.

The protein belongs to the sugar phosphate cyclases superfamily. Dehydroquinate synthase family. Co(2+) is required as a cofactor. The cofactor is Zn(2+). NAD(+) serves as cofactor.

The protein localises to the cytoplasm. It carries out the reaction 7-phospho-2-dehydro-3-deoxy-D-arabino-heptonate = 3-dehydroquinate + phosphate. The protein operates within metabolic intermediate biosynthesis; chorismate biosynthesis; chorismate from D-erythrose 4-phosphate and phosphoenolpyruvate: step 2/7. In terms of biological role, catalyzes the conversion of 3-deoxy-D-arabino-heptulosonate 7-phosphate (DAHP) to dehydroquinate (DHQ). The chain is 3-dehydroquinate synthase from Salmonella agona (strain SL483).